The primary structure comprises 944 residues: Leucine--tRNA ligase (944 aa).

The short motif at Pro-40–His-51 is the 'HIGH' region element. The 'KMSKS' region motif lies at Lys-718–Ser-722. Lys-721 contacts ATP.

The protein belongs to the class-I aminoacyl-tRNA synthetase family.

It is found in the cytoplasm. It carries out the reaction tRNA(Leu) + L-leucine + ATP = L-leucyl-tRNA(Leu) + AMP + diphosphate. This chain is Leucine--tRNA ligase, found in Bacteroides thetaiotaomicron (strain ATCC 29148 / DSM 2079 / JCM 5827 / CCUG 10774 / NCTC 10582 / VPI-5482 / E50).